A 637-amino-acid polypeptide reads, in one-letter code: Neuroendocrine convertase 2 (637 aa).

A signal peptide spans 1 to 24; it reads MEGGCGSQWKAAGFLFCVMVFASA. Residues 25-108 constitute a propeptide that is removed on maturation; that stretch reads ERPVFTNHFL…QQEGFDRKKR (84 aa). Residues 128-452 form the Peptidase S8 domain; it reads QWYLFNTGQA…YGVLDAGAMV (325 aa). Catalysis depends on charge relay system residues D166 and H207. 2 cysteine pairs are disulfide-bonded: C224–C375 and C316–C346. N374 is a glycosylation site (N-linked (GlcNAc...) asparagine). The active-site Charge relay system is S383. The 137-residue stretch at 460 to 596 folds into the P/Homo B domain; it reads TVPERFHCVG…TLMLHGTQSA (137 aa). C467 and C493 are disulfide-bonded. N513 and N523 each carry an N-linked (GlcNAc...) asparagine glycan.

This sequence belongs to the peptidase S8 family. Furin subfamily.

Its subcellular location is the cytoplasmic vesicle. The protein localises to the secretory vesicle. It localises to the secreted. The enzyme catalyses Release of protein hormones and neuropeptides from their precursors, generally by hydrolysis of -Lys-Arg-|- bonds.. Its function is as follows. Serine endopeptidase which is involved in the processing of hormone and other protein precursors at sites comprised of pairs of basic amino acid residues. Responsible for the release of glucagon from proglucagon in pancreatic A cells. This is Neuroendocrine convertase 2 (Pcsk2) from Mus musculus (Mouse).